Reading from the N-terminus, the 232-residue chain is Glutathione-specific gamma-glutamylcyclotransferase (232 aa).

Residue 10 to 15 (VLGYGS) coordinates substrate. Glutamate 115 functions as the Proton acceptor in the catalytic mechanism.

This sequence belongs to the gamma-glutamylcyclotransferase family. ChaC subfamily.

It localises to the cytoplasm. The protein resides in the nucleus. The enzyme catalyses glutathione = L-cysteinylglycine + 5-oxo-L-proline. In terms of biological role, catalyzes the cleavage of glutathione into 5-oxo-L-proline and a Cys-Gly dipeptide. Acts specifically on glutathione, but not on other gamma-glutamyl peptides. Allows utilization of gluthathione through subsequent cleavage of the Cys-Gly dipeptide by Cys-Gly metallodipeptidase DUG1. The sequence is that of Glutathione-specific gamma-glutamylcyclotransferase from Saccharomyces cerevisiae (strain ATCC 204508 / S288c) (Baker's yeast).